Consider the following 682-residue polypeptide: uncharacterized protein (682 aa).

This is an uncharacterized protein from Saccharomyces cerevisiae (strain ATCC 204508 / S288c) (Baker's yeast).